A 339-amino-acid chain; its full sequence is MKPDLPPRIAVLLVNLGTPDEPTAPAVRRYLKQFLSDPRVIEIPKFLWAIILNLFVLPSRPKRVAEAYASIWDGDSPMRNILNAQVEMLDKRLADRAAPFRVSVHAAMSYGNPGLPDVMDQLRSEGVDHFVMLPVFPQYSATSTGAVYDAITKWSLKQRNLPNITIVKDYFAHPLYIKALADSIRRFQAVHGKPEKLMFSFHGIPQPYADKGDPYPKRCKCTAAQVAHELGLKPDEWIISFQSRFGKQEWIKPYTDVVLKEWGSSGVRSVQILSPAFSADCLETLEELAIENRETFLHAGGQEYHYIPALNADEAHIDLLEAMSAPLVKGWAGTLDGWA.

The Fe cation site is built by His202 and Glu283.

It belongs to the ferrochelatase family.

The protein localises to the cytoplasm. The enzyme catalyses heme b + 2 H(+) = protoporphyrin IX + Fe(2+). The protein operates within porphyrin-containing compound metabolism; protoheme biosynthesis; protoheme from protoporphyrin-IX: step 1/1. Catalyzes the ferrous insertion into protoporphyrin IX. The protein is Ferrochelatase of Psychrobacter cryohalolentis (strain ATCC BAA-1226 / DSM 17306 / VKM B-2378 / K5).